The following is a 338-amino-acid chain: ATP synthase subunit a (338 aa).

The helical transmembrane segment at 15 to 35 (IAVLVMPLLLGFGAPIYAAAE) threads the bilayer. Positions 45–66 (AAAVHTDEAHGEAGEHAEGGHG) are disordered. The segment covering 49 to 65 (HTDEAHGEAGEHAEGGH) has biased composition (basic and acidic residues). 7 consecutive transmembrane segments (helical) span residues 109–129 (HVVFMWLAALILLLVFGYVGN), 174–194 (LLTVFVFILVLNLLGLIPYGA), 199–219 (NINVTLTLSVFTFFITQVSAI), 238–258 (ALWIIMIPIEVIGLFTKPFAL), 262–282 (LFANMTAGHIIILSLIFISFI), 287–307 (IVAIFVSVPFSIFIYLLEIFV), and 308–328 (SFLQAFIFTMLSALFIGLGSA).

It belongs to the ATPase A chain family. As to quaternary structure, F-type ATPases have 2 components, CF(1) - the catalytic core - and CF(0) - the membrane proton channel. CF(1) has five subunits: alpha(3), beta(3), gamma(1), delta(1), epsilon(1). CF(0) has four main subunits: a, b, b' and c.

The protein resides in the cell inner membrane. Its function is as follows. Key component of the proton channel; it plays a direct role in the translocation of protons across the membrane. This is ATP synthase subunit a from Chlorobium phaeobacteroides (strain BS1).